The sequence spans 265 residues: Hydroxyethylthiazole kinase (265 aa).

Methionine 36 provides a ligand contact to substrate. Residues lysine 112 and serine 160 each contribute to the ATP site. Position 187 (glycine 187) interacts with substrate.

This sequence belongs to the Thz kinase family. Mg(2+) is required as a cofactor.

It carries out the reaction 5-(2-hydroxyethyl)-4-methylthiazole + ATP = 4-methyl-5-(2-phosphooxyethyl)-thiazole + ADP + H(+). It functions in the pathway cofactor biosynthesis; thiamine diphosphate biosynthesis; 4-methyl-5-(2-phosphoethyl)-thiazole from 5-(2-hydroxyethyl)-4-methylthiazole: step 1/1. Functionally, catalyzes the phosphorylation of the hydroxyl group of 4-methyl-5-beta-hydroxyethylthiazole (THZ). The chain is Hydroxyethylthiazole kinase from Clostridium perfringens (strain 13 / Type A).